The following is a 356-amino-acid chain: S-adenosylmethionine:tRNA ribosyltransferase-isomerase (356 aa).

The protein belongs to the QueA family. As to quaternary structure, monomer.

Its subcellular location is the cytoplasm. The enzyme catalyses 7-aminomethyl-7-carbaguanosine(34) in tRNA + S-adenosyl-L-methionine = epoxyqueuosine(34) in tRNA + adenine + L-methionine + 2 H(+). It functions in the pathway tRNA modification; tRNA-queuosine biosynthesis. Transfers and isomerizes the ribose moiety from AdoMet to the 7-aminomethyl group of 7-deazaguanine (preQ1-tRNA) to give epoxyqueuosine (oQ-tRNA). In Xanthomonas axonopodis pv. citri (strain 306), this protein is S-adenosylmethionine:tRNA ribosyltransferase-isomerase.